The following is a 338-amino-acid chain: 1-aminocyclopropane-1-carboxylate deaminase (338 aa).

At Lys-51 the chain carries N6-(pyridoxal phosphate)lysine. Catalysis depends on Ser-78, which acts as the Nucleophile.

This sequence belongs to the ACC deaminase/D-cysteine desulfhydrase family. In terms of assembly, homotrimer. Pyridoxal 5'-phosphate serves as cofactor.

The enzyme catalyses 1-aminocyclopropane-1-carboxylate + H2O = 2-oxobutanoate + NH4(+). Functionally, catalyzes a cyclopropane ring-opening reaction, the irreversible conversion of 1-aminocyclopropane-1-carboxylate (ACC) to ammonia and alpha-ketobutyrate. Allows growth on ACC as a nitrogen source. This is 1-aminocyclopropane-1-carboxylate deaminase from Variovorax paradoxus.